The primary structure comprises 183 residues: Large ribosomal subunit protein uL6 (183 aa).

This sequence belongs to the universal ribosomal protein uL6 family. As to quaternary structure, part of the 50S ribosomal subunit.

Its function is as follows. This protein binds to the 23S rRNA, and is important in its secondary structure. It is located near the subunit interface in the base of the L7/L12 stalk, and near the tRNA binding site of the peptidyltransferase center. The protein is Large ribosomal subunit protein uL6 of Parabacteroides distasonis (strain ATCC 8503 / DSM 20701 / CIP 104284 / JCM 5825 / NCTC 11152).